We begin with the raw amino-acid sequence, 219 residues long: LexA repressor (219 aa).

Positions 28 to 48 (RAEIAAELGFRSANAAEEHLQ) form a DNA-binding region, H-T-H motif. Residues S138 and K175 each act as for autocatalytic cleavage activity in the active site.

The protein belongs to the peptidase S24 family. In terms of assembly, homodimer.

It carries out the reaction Hydrolysis of Ala-|-Gly bond in repressor LexA.. Functionally, represses a number of genes involved in the response to DNA damage (SOS response), including recA and lexA. In the presence of single-stranded DNA, RecA interacts with LexA causing an autocatalytic cleavage which disrupts the DNA-binding part of LexA, leading to derepression of the SOS regulon and eventually DNA repair. The polypeptide is LexA repressor (Herminiimonas arsenicoxydans).